The following is a 501-amino-acid chain: Lysine--tRNA ligase (501 aa).

Mg(2+)-binding residues include Glu-402 and Glu-409.

The protein belongs to the class-II aminoacyl-tRNA synthetase family. Homodimer. It depends on Mg(2+) as a cofactor.

Its subcellular location is the cytoplasm. It carries out the reaction tRNA(Lys) + L-lysine + ATP = L-lysyl-tRNA(Lys) + AMP + diphosphate. The chain is Lysine--tRNA ligase (lysS) from Helicobacter pylori (strain ATCC 700392 / 26695) (Campylobacter pylori).